The chain runs to 282 residues: NAC domain-containing protein 1 (282 aa).

In terms of domain architecture, NAC spans 9–161 (LPPGFRFHPT…DWVLCRIYKK (153 aa)). A DNA-binding region spans residues 106–167 (VGIKKALVFY…IYKKKNLGRT (62 aa)). A coiled-coil region spans residues 161 to 188 (KKNLGRTIEMMKVEEEELEAQNVSTTNN).

In terms of tissue distribution, expressed in roots, stem, flowers, and leaves.

The protein resides in the nucleus. Transcription factor that binds DNA motifs 5'-CGT[AG](5N)NACG[ACT][AC][AT][ACG][ACT]-3' and 5'-CACG[ACT][AC][AT][AGT][CT]-3' in target genes promoters. Promotes leaf senescence and reduces fruit yield and sugar content, probably by establishing abscisic acid (ABA) homeostasis. The polypeptide is NAC domain-containing protein 1 (Solanum lycopersicum (Tomato)).